The chain runs to 266 residues: DNA-directed RNA polymerase subunit Rpo3 (266 aa).

Positions 205, 208, and 211 each coordinate [3Fe-4S] cluster.

It belongs to the archaeal Rpo3/eukaryotic RPB3 RNA polymerase subunit family. Part of the RNA polymerase complex. [3Fe-4S] cluster is required as a cofactor.

Its subcellular location is the cytoplasm. It catalyses the reaction RNA(n) + a ribonucleoside 5'-triphosphate = RNA(n+1) + diphosphate. In terms of biological role, DNA-dependent RNA polymerase (RNAP) catalyzes the transcription of DNA into RNA using the four ribonucleoside triphosphates as substrates. The protein is DNA-directed RNA polymerase subunit Rpo3 of Methanosarcina acetivorans (strain ATCC 35395 / DSM 2834 / JCM 12185 / C2A).